The sequence spans 56 residues: Large ribosomal subunit protein bL32 (56 aa).

The segment covering 1 to 20 (MAVPKKKKSKSKRNHRHAVW) has biased composition (basic residues). The disordered stretch occupies residues 1-21 (MAVPKKKKSKSKRNHRHAVWK).

It belongs to the bacterial ribosomal protein bL32 family.

The polypeptide is Large ribosomal subunit protein bL32 (Prochlorococcus marinus (strain MIT 9312)).